The sequence spans 492 residues: Protein nucleotidyltransferase YdiU (492 aa).

Residues Gly-88, Gly-90, Arg-91, Lys-111, Asp-123, Gly-124, Arg-174, and Arg-181 each contribute to the ATP site. Catalysis depends on Asp-250, which acts as the Proton acceptor. Mg(2+) contacts are provided by Asn-251 and Asp-260. ATP is bound at residue Asp-260.

The protein belongs to the SELO family. Mg(2+) serves as cofactor. Mn(2+) is required as a cofactor.

The catalysed reaction is L-seryl-[protein] + ATP = 3-O-(5'-adenylyl)-L-seryl-[protein] + diphosphate. The enzyme catalyses L-threonyl-[protein] + ATP = 3-O-(5'-adenylyl)-L-threonyl-[protein] + diphosphate. It carries out the reaction L-tyrosyl-[protein] + ATP = O-(5'-adenylyl)-L-tyrosyl-[protein] + diphosphate. It catalyses the reaction L-histidyl-[protein] + UTP = N(tele)-(5'-uridylyl)-L-histidyl-[protein] + diphosphate. The catalysed reaction is L-seryl-[protein] + UTP = O-(5'-uridylyl)-L-seryl-[protein] + diphosphate. The enzyme catalyses L-tyrosyl-[protein] + UTP = O-(5'-uridylyl)-L-tyrosyl-[protein] + diphosphate. Its function is as follows. Nucleotidyltransferase involved in the post-translational modification of proteins. It can catalyze the addition of adenosine monophosphate (AMP) or uridine monophosphate (UMP) to a protein, resulting in modifications known as AMPylation and UMPylation. This Rhodopseudomonas palustris (strain BisB5) protein is Protein nucleotidyltransferase YdiU.